The following is a 110-amino-acid chain: UPF0060 membrane protein Pfl01_4105 (110 aa).

4 consecutive transmembrane segments (helical) span residues 5-25, 28-48, 59-79, and 84-104; these read LWFFLAALFEIAGCFAFWMWL, GKSALWVIPALISLTLFALLL, AYAAYGGIYIIASIGWLAVVE, and LGSDWIGVALCVIGATVILFG.

This sequence belongs to the UPF0060 family.

It localises to the cell inner membrane. The chain is UPF0060 membrane protein Pfl01_4105 from Pseudomonas fluorescens (strain Pf0-1).